Here is a 265-residue protein sequence, read N- to C-terminus: Orphan methyltransferase M.BamHII (265 aa).

This sequence belongs to the N(4)/N(6)-methyltransferase family. N(4) subfamily.

The enzyme catalyses a 2'-deoxycytidine in DNA + S-adenosyl-L-methionine = an N(4)-methyl-2'-deoxycytidine in DNA + S-adenosyl-L-homocysteine + H(+). Its function is as follows. A beta subtype methylase, recognizes the double-stranded sequence 5'-GGATCC-3', methylates C-? on both strands. No endonuclease has been identified for this methylase, although it is speculated it might protect against BamHI. The sequence is that of Orphan methyltransferase M.BamHII (bamHIIM) from Bacillus amyloliquefaciens (Bacillus velezensis).